A 197-amino-acid chain; its full sequence is ATP-dependent Clp protease proteolytic subunit 1 (197 aa).

The active-site Nucleophile is the Ser-96. The active site involves His-121.

The protein belongs to the peptidase S14 family. Fourteen ClpP subunits assemble into 2 heptameric rings which stack back to back to give a disk-like structure with a central cavity, resembling the structure of eukaryotic proteasomes.

It is found in the cytoplasm. The enzyme catalyses Hydrolysis of proteins to small peptides in the presence of ATP and magnesium. alpha-casein is the usual test substrate. In the absence of ATP, only oligopeptides shorter than five residues are hydrolyzed (such as succinyl-Leu-Tyr-|-NHMec, and Leu-Tyr-Leu-|-Tyr-Trp, in which cleavage of the -Tyr-|-Leu- and -Tyr-|-Trp bonds also occurs).. In terms of biological role, cleaves peptides in various proteins in a process that requires ATP hydrolysis. Has a chymotrypsin-like activity. Plays a major role in the degradation of misfolded proteins. This chain is ATP-dependent Clp protease proteolytic subunit 1, found in Synechococcus sp. (strain ATCC 27144 / PCC 6301 / SAUG 1402/1) (Anacystis nidulans).